A 434-amino-acid chain; its full sequence is Adenylosuccinate synthetase (434 aa).

Residues 15–21 and 43–45 contribute to the GTP site; these read GDEGKGK and GHT. Asp16 acts as the Proton acceptor in catalysis. Mg(2+)-binding residues include Asp16 and Gly43. Residues 16–19, 41–44, Thr133, Arg147, Gln228, Thr243, and Arg307 each bind IMP; these read DEGK and NAGH. His44 acts as the Proton donor in catalysis. Residue 303-309 coordinates substrate; that stretch reads SVTGRAR. Residues Arg309, 335–337, and 418–420 contribute to the GTP site; these read KLD and STG.

This sequence belongs to the adenylosuccinate synthetase family. In terms of assembly, homodimer. Requires Mg(2+) as cofactor.

It is found in the cytoplasm. The catalysed reaction is IMP + L-aspartate + GTP = N(6)-(1,2-dicarboxyethyl)-AMP + GDP + phosphate + 2 H(+). The protein operates within purine metabolism; AMP biosynthesis via de novo pathway; AMP from IMP: step 1/2. Plays an important role in the de novo pathway of purine nucleotide biosynthesis. Catalyzes the first committed step in the biosynthesis of AMP from IMP. In Neisseria meningitidis serogroup C / serotype 2a (strain ATCC 700532 / DSM 15464 / FAM18), this protein is Adenylosuccinate synthetase.